The following is a 361-amino-acid chain: Histidinol-phosphate aminotransferase (361 aa).

Lysine 223 bears the N6-(pyridoxal phosphate)lysine mark.

The protein belongs to the class-II pyridoxal-phosphate-dependent aminotransferase family. Histidinol-phosphate aminotransferase subfamily. In terms of assembly, homodimer. Requires pyridoxal 5'-phosphate as cofactor.

It carries out the reaction L-histidinol phosphate + 2-oxoglutarate = 3-(imidazol-4-yl)-2-oxopropyl phosphate + L-glutamate. It participates in amino-acid biosynthesis; L-histidine biosynthesis; L-histidine from 5-phospho-alpha-D-ribose 1-diphosphate: step 7/9. The polypeptide is Histidinol-phosphate aminotransferase (Deinococcus radiodurans (strain ATCC 13939 / DSM 20539 / JCM 16871 / CCUG 27074 / LMG 4051 / NBRC 15346 / NCIMB 9279 / VKM B-1422 / R1)).